A 171-amino-acid polypeptide reads, in one-letter code: uncharacterized protein (171 aa).

This is an uncharacterized protein from Rhizobium etli.